We begin with the raw amino-acid sequence, 133 residues long: Holo-[acyl-carrier-protein] synthase (133 aa).

Residues Asp-8 and Glu-57 each contribute to the Mg(2+) site.

The protein belongs to the P-Pant transferase superfamily. AcpS family. It depends on Mg(2+) as a cofactor.

The protein localises to the cytoplasm. The catalysed reaction is apo-[ACP] + CoA = holo-[ACP] + adenosine 3',5'-bisphosphate + H(+). Its function is as follows. Transfers the 4'-phosphopantetheine moiety from coenzyme A to a Ser of acyl-carrier-protein. In Bartonella tribocorum (strain CIP 105476 / IBS 506), this protein is Holo-[acyl-carrier-protein] synthase.